The sequence spans 104 residues: Thioredoxin-3 (104 aa).

The 103-residue stretch at 2 to 104 folds into the Thioredoxin domain; sequence SKVIHVTSNE…TLRSTLEANI (103 aa). Catalysis depends on nucleophile residues Cys31 and Cys34. Cys31 and Cys34 form a disulfide bridge.

This sequence belongs to the thioredoxin family.

Participates in various redox reactions through the reversible oxidation of its active center dithiol to a disulfide and catalyzes dithiol-disulfide exchange reactions. This Dictyostelium discoideum (Social amoeba) protein is Thioredoxin-3 (trxC).